The following is a 203-amino-acid chain: Small ribosomal subunit protein uS4c (203 aa).

The disordered stretch occupies residues 17–39; the sequence is TLPGLTTKKSNKLNRPGKDGNTD. One can recognise an S4 RNA-binding domain in the interval 92–164; it reads MRLDTLCFTL…IKNNQVREIP (73 aa).

The protein belongs to the universal ribosomal protein uS4 family. In terms of assembly, part of the 30S ribosomal subunit. Contacts protein S5. The interaction surface between S4 and S5 is involved in control of translational fidelity.

The protein localises to the plastid. It is found in the chloroplast. Its function is as follows. One of the primary rRNA binding proteins, it binds directly to 16S rRNA where it nucleates assembly of the body of the 30S subunit. With S5 and S12 plays an important role in translational accuracy. The polypeptide is Small ribosomal subunit protein uS4c (rps4) (Phaeodactylum tricornutum (strain CCAP 1055/1)).